The following is a 245-amino-acid chain: tRNA1(Val) (adenine(37)-N6)-methyltransferase (245 aa).

It belongs to the methyltransferase superfamily. tRNA (adenine-N(6)-)-methyltransferase family.

Its subcellular location is the cytoplasm. The enzyme catalyses adenosine(37) in tRNA1(Val) + S-adenosyl-L-methionine = N(6)-methyladenosine(37) in tRNA1(Val) + S-adenosyl-L-homocysteine + H(+). Its function is as follows. Specifically methylates the adenine in position 37 of tRNA(1)(Val) (anticodon cmo5UAC). This is tRNA1(Val) (adenine(37)-N6)-methyltransferase from Salmonella paratyphi C (strain RKS4594).